The following is a 223-amino-acid chain: Ras-related protein Rab-32 (223 aa).

A2 bears the N-acetylalanine mark. V34, G35, K36, T37, S38, S49, Q50, Y52, and T55 together coordinate GTP. A Mg(2+)-binding site is contributed by T37. Residues 46-60 (QLFSQHYRATIGVDF) carry the Switch 1 motif. T55 provides a ligand contact to Mg(2+). S69 bears the Phosphoserine mark. D79 provides a ligand contact to Mg(2+). Residues G82, N141, K142, D144, A173, and K174 each contribute to the GTP site. The Switch 2 motif lies at 82–95 (GQERFGNMTRVYYK). Residues 176–195 (NINIDEATRFLVENMLANQQ) are PKA-RII subunit binding domain. Residues C222 and C223 are each lipidated (S-geranylgeranyl cysteine).

The protein belongs to the small GTPase superfamily. Rab family. In terms of assembly, interacts with ANKRD27. A decreased interaction with ANKRD27 seen in the presence of SGSM2. Interacts with LRRK2 (via N-terminus); this interaction results in stimulation of RAB10 phosphorylation by LRRK2. Requires Mg(2+) as cofactor. In terms of tissue distribution, widely expressed with highest levels in liver. Strong expression also found in melanocyte, platelet, mast cell and fibroblast cell lines.

Its subcellular location is the mitochondrion. The protein localises to the mitochondrion outer membrane. It localises to the cytoplasmic vesicle. It is found in the phagosome. The protein resides in the phagosome membrane. Its subcellular location is the melanosome. The protein localises to the melanosome membrane. The enzyme catalyses GTP + H2O = GDP + phosphate + H(+). Its activity is regulated as follows. Regulated by guanine the nucleotide exchange factor (GEF) BLOC-3 complex composed of HPS1 and HPS4 which promote the exchange of bound GDP for free GTP. Regulated by the GTPase activating protein (GAP) SGSM2/RUTBC1 which increases the GTP hydrolysis activity. Inhibited by GDP dissociation inhibitors (GDIs) which prevent Rab-GDP dissociation. Its function is as follows. The small GTPases Rab are key regulators of intracellular membrane trafficking, from the formation of transport vesicles to their fusion with membranes. Rabs cycle between an inactive GDP-bound form and an active GTP-bound form that is able to recruit to membranes different set of downstream effectors directly responsible for vesicle formation, movement, tethering and fusion. Also acts as an A-kinase anchoring protein by binding to the type II regulatory subunit of protein kinase A and anchoring it to the mitochondrion. Also involved in synchronization of mitochondrial fission. Plays a role in the maturation of phagosomes that engulf pathogens, such as S.aureus and M.tuberculosis. Plays an important role in the control of melanin production and melanosome biogenesis. In concert with RAB38, regulates the proper trafficking of melanogenic enzymes TYR, TYRP1 and DCT/TYRP2 to melanosomes in melanocytes. Stimulates phosphorylation of RAB10 'Thr-73' by LRRK2. The protein is Ras-related protein Rab-32 of Mus musculus (Mouse).